We begin with the raw amino-acid sequence, 412 residues long: Tyrosine--tRNA ligase (412 aa).

Y31 serves as a coordination point for L-tyrosine. A 'HIGH' region motif is present at residues 36-45; sequence PTAPSLHIGH. The L-tyrosine site is built by Y162 and Q166. The 'KMSKS' region signature appears at 222-226; sequence KIGKT. K225 lines the ATP pocket. The S4 RNA-binding domain maps to 345-412; that stretch reads KRWLDVVVQL…KKKKQVIDLN (68 aa).

This sequence belongs to the class-I aminoacyl-tRNA synthetase family. TyrS type 1 subfamily. As to quaternary structure, homodimer.

It localises to the cytoplasm. The enzyme catalyses tRNA(Tyr) + L-tyrosine + ATP = L-tyrosyl-tRNA(Tyr) + AMP + diphosphate + H(+). Catalyzes the attachment of tyrosine to tRNA(Tyr) in a two-step reaction: tyrosine is first activated by ATP to form Tyr-AMP and then transferred to the acceptor end of tRNA(Tyr). The sequence is that of Tyrosine--tRNA ligase from Chlamydia muridarum (strain MoPn / Nigg).